A 492-amino-acid chain; its full sequence is N-succinylglutamate 5-semialdehyde dehydrogenase (492 aa).

Residue Gly220–Gly225 coordinates NAD(+). Catalysis depends on residues Glu243 and Cys277.

The protein belongs to the aldehyde dehydrogenase family. AstD subfamily.

The enzyme catalyses N-succinyl-L-glutamate 5-semialdehyde + NAD(+) + H2O = N-succinyl-L-glutamate + NADH + 2 H(+). It participates in amino-acid degradation; L-arginine degradation via AST pathway; L-glutamate and succinate from L-arginine: step 4/5. Its function is as follows. Catalyzes the NAD-dependent reduction of succinylglutamate semialdehyde into succinylglutamate. The chain is N-succinylglutamate 5-semialdehyde dehydrogenase from Shigella boydii serotype 4 (strain Sb227).